A 172-amino-acid polypeptide reads, in one-letter code: RNA silencing suppressor p19 (172 aa).

Residues 1 to 15 are compositionally biased toward basic and acidic residues; it reads MERAIQGNDAREQAY. Positions 1-38 are disordered; that stretch reads MERAIQGNDAREQAYGERWNGGPGGSTSPFQLPDESPS.

Belongs to the tombusvirus protein p19 family. As to quaternary structure, homodimer.

Its function is as follows. Viral suppressor of RNA silencing which binds specifically to silencing RNAs (siRNAs). Acts as a molecular caliper to specifically select siRNAs based on the length of the duplex region of the RNA. This is RNA silencing suppressor p19 from Tomato bushy stunt virus (strain A23) (TBSV).